Reading from the N-terminus, the 162-residue chain is 2-C-methyl-D-erythritol 2,4-cyclodiphosphate synthase (162 aa).

A divalent metal cation contacts are provided by aspartate 12 and histidine 14. Residues 12–14 (DVH) and 38–39 (HS) each bind 4-CDP-2-C-methyl-D-erythritol 2-phosphate. Histidine 46 serves as a coordination point for a divalent metal cation. Residues 60-62 (DIG), 65-69 (FPDTD), and arginine 146 each bind 4-CDP-2-C-methyl-D-erythritol 2-phosphate.

Belongs to the IspF family. As to quaternary structure, homotrimer. A divalent metal cation is required as a cofactor.

The enzyme catalyses 4-CDP-2-C-methyl-D-erythritol 2-phosphate = 2-C-methyl-D-erythritol 2,4-cyclic diphosphate + CMP. It participates in isoprenoid biosynthesis; isopentenyl diphosphate biosynthesis via DXP pathway; isopentenyl diphosphate from 1-deoxy-D-xylulose 5-phosphate: step 4/6. In terms of biological role, involved in the biosynthesis of isopentenyl diphosphate (IPP) and dimethylallyl diphosphate (DMAPP), two major building blocks of isoprenoid compounds. Catalyzes the conversion of 4-diphosphocytidyl-2-C-methyl-D-erythritol 2-phosphate (CDP-ME2P) to 2-C-methyl-D-erythritol 2,4-cyclodiphosphate (ME-CPP) with a corresponding release of cytidine 5-monophosphate (CMP). The chain is 2-C-methyl-D-erythritol 2,4-cyclodiphosphate synthase from Bordetella avium (strain 197N).